The primary structure comprises 343 residues: Protein FAM50A-B (343 aa).

2 disordered regions span residues 1 to 25 and 125 to 181; these read MAQY…EKQR and EEDE…EEEN. Residues 125–142 show a composition bias toward acidic residues; that stretch reads EEDEECEDEESEEEEEEY. Basic and acidic residues predominate over residues 172–181; that stretch reads PDRDREEEEN.

This sequence belongs to the FAM50 family.

It localises to the nucleus. Functionally, probably involved in the regulation of pre-mRNA splicing. The polypeptide is Protein FAM50A-B (fam50a-b) (Xenopus laevis (African clawed frog)).